Here is a 739-residue protein sequence, read N- to C-terminus: Potassium transporter 26 (739 aa).

Residues 1 to 81 (MEYHHRPHSP…RQVALLSFQS (81 aa)) lie on the Cytoplasmic side of the membrane. A helical membrane pass occupies residues 82 to 102 (LGVVYGDLGTSPLYVFSSISL). The Extracellular portion of the chain corresponds to 103 to 112 (DDPGEADFVG). The helical transmembrane segment at 113–133 (ILSIILWTFTMICLVKYVFIV) threads the bilayer. Topologically, residues 134-198 (LKADDHGEGG…KFLEQSTKWQ (65 aa)) are cytoplasmic. Residues 199 to 219 (AVITYIVLAGTCMVLGDGALT) form a helical membrane-spanning segment. Over 220 to 236 (PAISVLSAVQGIQSRSS) the chain is Extracellular. Residues 237 to 257 (SITQAHVVLLSVIILFILFFF) traverse the membrane as a helical segment. Topologically, residues 258 to 268 (QKHGTSKVSFT) are cytoplasmic. The helical transmembrane segment at 269-289 (FSPIMILWFTFVAFIGLYNII) threads the bilayer. Over 290–318 (KHYPPILKAVSPHYIIIYFIRNKRAAWET) the chain is Extracellular. A helical transmembrane segment spans residues 319–339 (LGAIVLCITGAEAMFADLGHF). Residues 340-347 (NKSSIQMA) lie on the Cytoplasmic side of the membrane. A helical membrane pass occupies residues 348–368 (FSVIVYPSMILAYAGQAAFLV). Topologically, residues 369–385 (KNPSKLSTTFYSSTPEP) are extracellular. Residues 386–406 (LFWPMFIIATLAAIVASQALI) traverse the membrane as a helical segment. Residues 407–437 (SASFSIIRQSIALGCFPRVTMKHTSGKHEGQ) lie on the Cytoplasmic side of the membrane. The chain crosses the membrane as a helical span at residues 438–458 (VYSPEINYFLMVACILITVGF). The Extracellular segment spans residues 459–469 (KGGPEIGQAFG). A helical transmembrane segment spans residues 470–490 (VAVIFVMLFTTNLMTVVMLII). Topologically, residues 491-494 (WESN) are cytoplasmic. The helical transmembrane segment at 495-515 (IALASLFFVFFFSIEGIYMTS) threads the bilayer. Residues 516–519 (LMNK) lie on the Extracellular side of the membrane. A helical transmembrane segment spans residues 520-540 (ILQGGWVPFAITAFFLIITLS). Over 541 to 739 (WTYGRSKKGE…TLQVGMLYEI (199 aa)) the chain is Cytoplasmic.

Belongs to the HAK/KUP transporter (TC 2.A.72.3) family.

It localises to the membrane. Its function is as follows. High-affinity potassium transporter. This Oryza sativa subsp. japonica (Rice) protein is Potassium transporter 26 (HAK26).